Consider the following 796-residue polypeptide: Inactive dipeptidyl peptidase 10 (796 aa).

Over 1-34 (MNQTASVSHHIKCQPSKTIKELGSNSPPQRNWKG) the chain is Cytoplasmic. Residues 1–56 (MNQTASVSHHIKCQPSKTIKELGSNSPPQRNWKGIAIALLVILVVCSLITMSVILL) are mediates effects on KCND2. Residues 35 to 55 (IAIALLVILVVCSLITMSVIL) traverse the membrane as a helical; Signal-anchor for type II membrane protein segment. Residues 56 to 796 (LTPDELTNSS…VLPQEPEEDE (741 aa)) are Extracellular-facing. 3 N-linked (GlcNAc...) asparagine glycosylation sites follow: N90, N111, and N119. Y138 and Y143 each carry phosphotyrosine. N-linked (GlcNAc...) asparagine glycosylation is found at N257, N342, and N748.

This sequence belongs to the peptidase S9B family. DPPIV subfamily. As to quaternary structure, may form oligomers. Interacts with KCND1. Interacts with KCND2. In terms of processing, N-glycosylation is important for cell surface expression, specially at Asn-257, which is crucial. Found in serum, T-cells and brain (at protein level). Expressed in brain, pancreas, spinal cord and adrenal glands.

Its subcellular location is the cell membrane. In terms of biological role, promotes cell surface expression of the potassium channel KCND2. Modulates the activity and gating characteristics of the potassium channel KCND2. Has no dipeptidyl aminopeptidase activity. This is Inactive dipeptidyl peptidase 10 (DPP10) from Homo sapiens (Human).